The following is a 367-amino-acid chain: Putative ionic transporter y4hA (367 aa).

11 consecutive transmembrane segments (helical) span residues 12–32, 39–59, 74–94, 108–128, 143–163, 172–192, 221–241, 249–269, 291–311, 318–338, and 347–367; these read VPLWSWIIPLFGCVIAAMTLA, SVVLLLMSAGLLTGAVFASVH, AILLAVCVTIIEVAIIGSLML, VFAAVMIVLNGVIGLCLVLGG, AALAVLGTLATLSLVLPNFVT, AIQLVVIGLVSVVLYGVFLFV, LAAGALLVLALIAVILLAMLL, VEALGLPQAVVGVTIAGVVLL, VLGSALASIGVTIPVVAAISV, ALGLAPQNLIMLILTLFVGTI, and VLQGAVHLAIFTVFLLLSAIP.

It belongs to the Ca(2+):cation antiporter (CaCA) (TC 2.A.19) family.

The protein resides in the cell membrane. Functionally, possible cation transporter. The polypeptide is Putative ionic transporter y4hA (Sinorhizobium fredii (strain NBRC 101917 / NGR234)).